The following is a 902-amino-acid chain: AAA+ ATPase ClpV1 (902 aa).

The region spanning F10–D151 is the Clp R domain. Repeat regions lie at residues L13–L78 and L88–D151. Residue G237 to T244 participates in ATP binding. A coiled-coil region spans residues A441–E559. Residue G640–T647 coordinates ATP.

The protein belongs to the ClpA/ClpB family. In terms of assembly, interacts with TagJ.

It localises to the cytoplasm. Functionally, component of the H1 type VI (H1-T6SS) secretion system that plays a role in the release of toxins targeting both eukaryotic and prokaryotic species. Acts as an AAA(+) ATPase that disassembles the contracted sheath, which resets the systems for reassembly of an extended sheath that is ready to fire again. The chain is AAA+ ATPase ClpV1 (clpV1) from Pseudomonas aeruginosa (strain ATCC 15692 / DSM 22644 / CIP 104116 / JCM 14847 / LMG 12228 / 1C / PRS 101 / PAO1).